The sequence spans 788 residues: Phenylalanine--tRNA ligase beta subunit (788 aa).

One can recognise a tRNA-binding domain in the interval 39–147 (FNVSGEIITA…DPVELGVNVV (109 aa)). The 74-residue stretch at 399 to 472 (IEPKKVMLRK…RIYGYEKVES (74 aa)) folds into the B5 domain. Positions 450, 456, 459, and 460 each coordinate Mg(2+). The FDX-ACB domain maps to 694–787 (PRFPAVRRDI…AEREFGIRRR (94 aa)).

Belongs to the phenylalanyl-tRNA synthetase beta subunit family. Type 1 subfamily. As to quaternary structure, tetramer of two alpha and two beta subunits. It depends on Mg(2+) as a cofactor.

The protein resides in the cytoplasm. The enzyme catalyses tRNA(Phe) + L-phenylalanine + ATP = L-phenylalanyl-tRNA(Phe) + AMP + diphosphate + H(+). The polypeptide is Phenylalanine--tRNA ligase beta subunit (pheT) (Thermotoga maritima (strain ATCC 43589 / DSM 3109 / JCM 10099 / NBRC 100826 / MSB8)).